Consider the following 215-residue polypeptide: 3-isopropylmalate dehydratase small subunit (215 aa).

Belongs to the LeuD family. LeuD type 1 subfamily. Heterodimer of LeuC and LeuD.

The catalysed reaction is (2R,3S)-3-isopropylmalate = (2S)-2-isopropylmalate. Its pathway is amino-acid biosynthesis; L-leucine biosynthesis; L-leucine from 3-methyl-2-oxobutanoate: step 2/4. Its function is as follows. Catalyzes the isomerization between 2-isopropylmalate and 3-isopropylmalate, via the formation of 2-isopropylmaleate. The protein is 3-isopropylmalate dehydratase small subunit of Xylella fastidiosa (strain M12).